Here is a 49-residue protein sequence, read N- to C-terminus: Large ribosomal subunit protein bL33 (49 aa).

Belongs to the bacterial ribosomal protein bL33 family.

The polypeptide is Large ribosomal subunit protein bL33 (Alkaliphilus metalliredigens (strain QYMF)).